Consider the following 195-residue polypeptide: Early light-induced protein 1, chloroplastic (195 aa).

The N-terminal 46 residues, 1 to 46, are a transit peptide targeting the chloroplast; sequence MATASFNMQSVFAGGLTTRKINTNKLFSAGSFPNLKRNYPVGVRCM. Residues 46 to 81 are disordered; that stretch reads MAEGGPTNEDSSPAPSTSAAQPLPKSPSPPPPMKPK. Low complexity predominate over residues 56 to 68; the sequence is SSPAPSTSAAQPL. A compositionally biased stretch (pro residues) spans 69–79; sequence PKSPSPPPPMK. 3 consecutive transmembrane segments (helical) span residues 104-124, 131-151, and 175-195; these read LAMV…ENVL, GVSW…VPLF, and FAML…GTLV.

This sequence belongs to the ELIP/psbS family.

The protein resides in the plastid. It localises to the chloroplast thylakoid membrane. Its function is as follows. Prevents excess accumulation of free chlorophyll by inhibiting the entire chlorophyll biosynthesis pathway (e.g. 5-aminolevulinate synthesis and Mg-protoporphyrin IX chelatase activity), and hence prevent photooxidative stress. Probably involved in the integration of pigments into the mature light-harvesting pigment-protein complexes. Light-harvesting chlorophyll (LHC) a/b-binding protein required to ensure a high rate of chlorophyll accumulation during deetiolation in continuous high light. Involved in seed germination. May fulfill a photoprotective functions. This Arabidopsis thaliana (Mouse-ear cress) protein is Early light-induced protein 1, chloroplastic.